A 485-amino-acid chain; its full sequence is Probable glycine dehydrogenase (decarboxylating) subunit 2 (485 aa).

N6-(pyridoxal phosphate)lysine is present on Lys-269.

It belongs to the GcvP family. C-terminal subunit subfamily. As to quaternary structure, the glycine cleavage system is composed of four proteins: P, T, L and H. In this organism, the P 'protein' is a heterodimer of two subunits. Pyridoxal 5'-phosphate is required as a cofactor.

The enzyme catalyses N(6)-[(R)-lipoyl]-L-lysyl-[glycine-cleavage complex H protein] + glycine + H(+) = N(6)-[(R)-S(8)-aminomethyldihydrolipoyl]-L-lysyl-[glycine-cleavage complex H protein] + CO2. Functionally, the glycine cleavage system catalyzes the degradation of glycine. The P protein binds the alpha-amino group of glycine through its pyridoxal phosphate cofactor; CO(2) is released and the remaining methylamine moiety is then transferred to the lipoamide cofactor of the H protein. The polypeptide is Probable glycine dehydrogenase (decarboxylating) subunit 2 (Chlorobium phaeovibrioides (strain DSM 265 / 1930) (Prosthecochloris vibrioformis (strain DSM 265))).